Consider the following 461-residue polypeptide: UDP-N-acetylmuramate--L-alanine ligase (461 aa).

112–118 is a binding site for ATP; the sequence is GTHGKTT.

It belongs to the MurCDEF family.

It is found in the cytoplasm. The catalysed reaction is UDP-N-acetyl-alpha-D-muramate + L-alanine + ATP = UDP-N-acetyl-alpha-D-muramoyl-L-alanine + ADP + phosphate + H(+). It participates in cell wall biogenesis; peptidoglycan biosynthesis. Functionally, cell wall formation. The protein is UDP-N-acetylmuramate--L-alanine ligase of Geobacter sp. (strain M21).